We begin with the raw amino-acid sequence, 57 residues long: Large ribosomal subunit protein bL32 (57 aa).

The span at 1–16 (MAVQKSRKTPSRRGMR) shows a compositional bias: basic residues. Residues 1–37 (MAVQKSRKTPSRRGMRRSHDALSTTAITVDETTGELH) are disordered. A compositionally biased stretch (polar residues) spans 21–31 (ALSTTAITVDE).

It belongs to the bacterial ribosomal protein bL32 family.

The sequence is that of Large ribosomal subunit protein bL32 from Hydrogenovibrio crunogenus (strain DSM 25203 / XCL-2) (Thiomicrospira crunogena).